Here is a 786-residue protein sequence, read N- to C-terminus: uncharacterized protein (786 aa).

W361–D362 is a binding site for substrate. Residue E488 is the Proton donor of the active site. Residue K590 to Q591 coordinates substrate. The interval T762–R786 is disordered. Residues L766 to R776 show a composition bias toward pro residues.

This sequence belongs to the glycosyl hydrolase 65 family.

This is an uncharacterized protein from Mycobacterium tuberculosis (strain CDC 1551 / Oshkosh).